A 178-amino-acid polypeptide reads, in one-letter code: Large ribosomal subunit protein uL10 (178 aa).

This sequence belongs to the universal ribosomal protein uL10 family. In terms of assembly, part of the ribosomal stalk of the 50S ribosomal subunit. The N-terminus interacts with L11 and the large rRNA to form the base of the stalk. The C-terminus forms an elongated spine to which L12 dimers bind in a sequential fashion forming a multimeric L10(L12)X complex.

Forms part of the ribosomal stalk, playing a central role in the interaction of the ribosome with GTP-bound translation factors. The polypeptide is Large ribosomal subunit protein uL10 (Dictyoglomus thermophilum (strain ATCC 35947 / DSM 3960 / H-6-12)).